A 466-amino-acid polypeptide reads, in one-letter code: Ribulose bisphosphate carboxylase large chain (466 aa).

Position 5 is an N6,N6,N6-trimethyllysine (Lys5). Positions 114 and 164 each coordinate substrate. Lys166 functions as the Proton acceptor in the catalytic mechanism. Lys168 provides a ligand contact to substrate. Mg(2+) is bound by residues Lys192, Asp194, and Glu195. Lys192 is subject to N6-carboxylysine. The active-site Proton acceptor is His285. 3 residues coordinate substrate: Arg286, His318, and Ser370.

This sequence belongs to the RuBisCO large chain family. Type I subfamily. In terms of assembly, heterohexadecamer of 8 large chains and 8 small chains; disulfide-linked. The disulfide link is formed within the large subunit homodimers. Mg(2+) serves as cofactor. Post-translationally, the disulfide bond which can form in the large chain dimeric partners within the hexadecamer appears to be associated with oxidative stress and protein turnover.

The protein resides in the plastid. It localises to the chloroplast. It catalyses the reaction 2 (2R)-3-phosphoglycerate + 2 H(+) = D-ribulose 1,5-bisphosphate + CO2 + H2O. The catalysed reaction is D-ribulose 1,5-bisphosphate + O2 = 2-phosphoglycolate + (2R)-3-phosphoglycerate + 2 H(+). Its function is as follows. RuBisCO catalyzes two reactions: the carboxylation of D-ribulose 1,5-bisphosphate, the primary event in carbon dioxide fixation, as well as the oxidative fragmentation of the pentose substrate in the photorespiration process. Both reactions occur simultaneously and in competition at the same active site. This chain is Ribulose bisphosphate carboxylase large chain, found in Drosophyllum lusitanicum (Portuguese sundew).